The following is a 570-amino-acid chain: Proline--tRNA ligase (570 aa).

This sequence belongs to the class-II aminoacyl-tRNA synthetase family. ProS type 1 subfamily. As to quaternary structure, homodimer.

The protein localises to the cytoplasm. It carries out the reaction tRNA(Pro) + L-proline + ATP = L-prolyl-tRNA(Pro) + AMP + diphosphate. Catalyzes the attachment of proline to tRNA(Pro) in a two-step reaction: proline is first activated by ATP to form Pro-AMP and then transferred to the acceptor end of tRNA(Pro). As ProRS can inadvertently accommodate and process non-cognate amino acids such as alanine and cysteine, to avoid such errors it has two additional distinct editing activities against alanine. One activity is designated as 'pretransfer' editing and involves the tRNA(Pro)-independent hydrolysis of activated Ala-AMP. The other activity is designated 'posttransfer' editing and involves deacylation of mischarged Ala-tRNA(Pro). The misacylated Cys-tRNA(Pro) is not edited by ProRS. In Clostridium perfringens (strain SM101 / Type A), this protein is Proline--tRNA ligase.